Here is a 430-residue protein sequence, read N- to C-terminus: Signal recognition particle protein (430 aa).

GTP-binding positions include 105–112 (GLQGSGKT), 187–191 (DTAGR), and 245–248 (TKLD).

This sequence belongs to the GTP-binding SRP family. SRP54 subfamily. Part of the signal recognition particle protein translocation system, which is composed of SRP and FtsY.

Its subcellular location is the cytoplasm. The catalysed reaction is GTP + H2O = GDP + phosphate + H(+). In terms of biological role, involved in targeting and insertion of nascent membrane proteins into the cytoplasmic membrane. Binds to the hydrophobic signal sequence of the ribosome-nascent chain (RNC) as it emerges from the ribosomes. The SRP-RNC complex is then targeted to the cytoplasmic membrane where it interacts with the SRP receptor FtsY. The polypeptide is Signal recognition particle protein (Thermus aquaticus).